We begin with the raw amino-acid sequence, 252 residues long: Geranylgeranylglyceryl phosphate synthase (252 aa).

Residues aspartate 26 and serine 55 each contribute to the Mg(2+) site. Residues tyrosine 174–glycine 180, glycine 205–glycine 206, and glycine 227–threonine 228 contribute to the sn-glycerol 1-phosphate site.

Belongs to the GGGP/HepGP synthase family. Group II subfamily. Mg(2+) is required as a cofactor.

The protein resides in the cytoplasm. It carries out the reaction sn-glycerol 1-phosphate + (2E,6E,10E)-geranylgeranyl diphosphate = sn-3-O-(geranylgeranyl)glycerol 1-phosphate + diphosphate. The protein operates within membrane lipid metabolism; glycerophospholipid metabolism. Its function is as follows. Prenyltransferase that catalyzes the transfer of the geranylgeranyl moiety of geranylgeranyl diphosphate (GGPP) to the C3 hydroxyl of sn-glycerol-1-phosphate (G1P). This reaction is the first ether-bond-formation step in the biosynthesis of archaeal membrane lipids. This Thermococcus gammatolerans (strain DSM 15229 / JCM 11827 / EJ3) protein is Geranylgeranylglyceryl phosphate synthase.